A 944-amino-acid polypeptide reads, in one-letter code: MFQNSMKQRMTWEEFHGPNLGYVLELYDQYVKDPESLDADLKEMFDELGAPPGDIRAASQKNEEADFTAGSIQKIASAVKLAEDIRTYGHLNASVNPLRKTQEKQELFPLAEYGLTEQDVKKIPASVICKDAPKEVTNGLEAIQYLRNTYKKSISFEFDHVHIFEERNWLMKKIESGELFTPKSKEKLVEVLRRLTEVESLEQFLHKTFVGQKRFSIEGLDALVPMLDDIIAKSVSAGTTNVNIGMAHRGRLNVLAHVLGKPYEIIFSEFQHAPNKDLVPSEGSTGINYGWTGDVKYHLGANRQIQDEHTKTARIALANNPSHLEFIDPIVEGSTRAAQETRTESGYPVQDVKKSMAILIHGDAAFPGEGIVAETLNLSQLKGYQVGGAIHIIANNMIGFTTESNESRSTKYASDLAKGFEIPIVHVNADDPEACLSAVQLAVEYRMTFNKDFLIDLIGYRRFGHNEMDEPSATQPMLYDAVRKHPTVKNIFAEKLIHKGIVDKETVGKIKDAVQKRLEEAYRKVPAKKEDMTHEIVLPEPVSNGFPDVDTSVDFETLRKINQELVSWPENFNVFDKLKRILERRAKAFEDDRKVDWSLAEAMAFASILKDGTPLRLTGQDSERGTFAHRNLVLHDSKTGDEFIALHHLADTKASFAVHNSPLSEGSVLGFEYGYNVSSPETMVIWEAQFGDFANAAQVYFDQFISAGRAKWGQKSGLVVLLPHGYEGQGPEHSSGRTERFLQLAAENNWTVANLTSAAQYFHILRRQAKMLLREEIRPLIIMTPKSLLRNPNTVSEVQELSNSSFKPVYEMSGLSHQYDKVTRLVLSSGKVSIDISDHFNKMEGEKDWLHIARVEELYPFPAKHIKAIFSKLPNLEEIVWVQEEPQNMGAWNYIEPYLREVAPKDVKVRYIGRRRRSSPAEGDPTVHKKEQERIVSDSLTRKN.

The tract at residues Arg914–Asn944 is disordered. Positions Pro925–Val936 are enriched in basic and acidic residues.

This sequence belongs to the alpha-ketoglutarate dehydrogenase family. As to quaternary structure, homodimer. Part of the 2-oxoglutarate dehydrogenase (OGDH) complex composed of E1 (2-oxoglutarate dehydrogenase), E2 (dihydrolipoamide succinyltransferase) and E3 (dihydrolipoamide dehydrogenase); the complex contains multiple copies of the three enzymatic components (E1, E2 and E3). Requires thiamine diphosphate as cofactor.

The catalysed reaction is N(6)-[(R)-lipoyl]-L-lysyl-[protein] + 2-oxoglutarate + H(+) = N(6)-[(R)-S(8)-succinyldihydrolipoyl]-L-lysyl-[protein] + CO2. Its function is as follows. E1 component of the 2-oxoglutarate dehydrogenase (OGDH) complex which catalyzes the decarboxylation of 2-oxoglutarate, the first step in the conversion of 2-oxoglutarate to succinyl-CoA and CO(2). This Bacillus licheniformis (strain ATCC 14580 / DSM 13 / JCM 2505 / CCUG 7422 / NBRC 12200 / NCIMB 9375 / NCTC 10341 / NRRL NRS-1264 / Gibson 46) protein is 2-oxoglutarate dehydrogenase E1 component.